We begin with the raw amino-acid sequence, 167 residues long: Mannose-specific lectin (167 aa).

The first 24 residues, M1–A24, serve as a signal peptide directing secretion. One can recognise a Bulb-type lectin domain in the interval D25 to F138. The cysteines at positions 53 and 76 are disulfide-linked.

Homotetramer. In terms of tissue distribution, expressed in the pseudobulb, with highest levels of expression in the non-swollen internode (at protein level).

It localises to the secreted. In terms of biological role, mannose-specific lectin. Shows agglutinating activity towards chicken erythrocytes. Has antifungal activity against A.alternata and Collectotrichum species. In Dendrobium findlayanum (Findlay's orchid), this protein is Mannose-specific lectin.